Reading from the N-terminus, the 216-residue chain is MTKLTARQQQVFDLIRRAIERTGFPPTRAEIAAELGFSSANSAEEHLRALARKGVIELAAGASRGIRLLAGPEDSPHQFTLPHASIMQLSLPLIGRVAAGSPILAQEHISQHYACDPALFSSKPDYLLKVRGLSMRDAGIFDGDLLAVQKKSEAKDGQIVIARLGDDVTVKRLKRRPNGLELIAENPDYENIFVETGSAEFALEGIAVGLIRPGEF.

Positions 28–48 (RAEIAAELGFSSANSAEEHLR) form a DNA-binding region, H-T-H motif. Residues serine 134 and lysine 171 each act as for autocatalytic cleavage activity in the active site.

It belongs to the peptidase S24 family. As to quaternary structure, homodimer.

It carries out the reaction Hydrolysis of Ala-|-Gly bond in repressor LexA.. Represses a number of genes involved in the response to DNA damage (SOS response), including recA and lexA. In the presence of single-stranded DNA, RecA interacts with LexA causing an autocatalytic cleavage which disrupts the DNA-binding part of LexA, leading to derepression of the SOS regulon and eventually DNA repair. This Paraburkholderia xenovorans (strain LB400) protein is LexA repressor.